We begin with the raw amino-acid sequence, 192 residues long: Peptidyl-tRNA hydrolase (192 aa).

Residue tyrosine 14 participates in tRNA binding. The active-site Proton acceptor is histidine 19. Tyrosine 64, asparagine 66, and asparagine 112 together coordinate tRNA.

Belongs to the PTH family. Monomer.

It is found in the cytoplasm. It catalyses the reaction an N-acyl-L-alpha-aminoacyl-tRNA + H2O = an N-acyl-L-amino acid + a tRNA + H(+). Hydrolyzes ribosome-free peptidyl-tRNAs (with 1 or more amino acids incorporated), which drop off the ribosome during protein synthesis, or as a result of ribosome stalling. Functionally, catalyzes the release of premature peptidyl moieties from peptidyl-tRNA molecules trapped in stalled 50S ribosomal subunits, and thus maintains levels of free tRNAs and 50S ribosomes. The polypeptide is Peptidyl-tRNA hydrolase (Prosthecochloris aestuarii (strain DSM 271 / SK 413)).